A 1383-amino-acid polypeptide reads, in one-letter code: DNA-directed RNA polymerase subunit beta'' (1383 aa).

Residues Cys-220, Cys-289, Cys-296, and Cys-299 each coordinate Zn(2+).

This sequence belongs to the RNA polymerase beta' chain family. RpoC2 subfamily. In plastids the minimal PEP RNA polymerase catalytic core is composed of four subunits: alpha, beta, beta', and beta''. When a (nuclear-encoded) sigma factor is associated with the core the holoenzyme is formed, which can initiate transcription. Zn(2+) serves as cofactor.

The protein localises to the plastid. Its subcellular location is the chloroplast. It carries out the reaction RNA(n) + a ribonucleoside 5'-triphosphate = RNA(n+1) + diphosphate. In terms of biological role, DNA-dependent RNA polymerase catalyzes the transcription of DNA into RNA using the four ribonucleoside triphosphates as substrates. The sequence is that of DNA-directed RNA polymerase subunit beta'' from Oenothera argillicola (Appalachian evening primrose).